Reading from the N-terminus, the 380-residue chain is GDP-mannose:cellobiosyl-diphosphopolyprenol alpha-mannosyltransferase (380 aa).

It belongs to the glycosyltransferase group 1 family. Glycosyltransferase 4 subfamily.

The enzyme catalyses beta-D-Glc-(1-&gt;4)-alpha-D-Glc-di-trans,octa-cis-undecaprenyl diphosphate + GDP-alpha-D-mannose = alpha-D-Man-(1-&gt;3)-beta-D-Glc-(1-&gt;4)-alpha-D-Glc-1-di-trans,octa-cis-undecaprenyl diphosphate + GDP + H(+). In terms of biological role, involved in the biosynthesis of the exopolysaccharide xanthan, a polymer that is comprised of repeating pentasaccharide units with the structure of a beta-(1,4)-linked D-glucose backbone with trisaccharide side chains composed of mannose-beta-(1,4)-glucuronic acid-beta-(1,2)-mannose attached to alternate glucose residues in the backbone by alpha-(1,3) linkages. Xanthan is involved in pathogenicity but has also been used in a variety of applications as a specialty polymer for commercial applications, including food additives, where they act as viscosifying, stabilizing, emulsifying, or gelling agents. This Xanthomonas campestris protein is GDP-mannose:cellobiosyl-diphosphopolyprenol alpha-mannosyltransferase (gumH).